Consider the following 613-residue polypeptide: Pentatricopeptide repeat-containing protein At2g02750 (613 aa).

15 PPR repeats span residues 30-64 (NKFT…GFFV), 65-99 (DVFT…GIAS), 101-126 (NAAV…ARVS), 128-162 (SGMN…GFEM), 163-193 (EVYV…VPHK), 194-228 (SVVT…SSEE), 230-264 (NDVT…EFQF), 265-295 (ETMV…LKDT), 297-331 (NLIS…GLKP), 332-366 (DSAT…VMVP), 367-401 (SLKC…AAER), 402-432 (DIFV…FEPK), 435-469 (DPVF…KVEP), 470-500 (SLAT…MQEE), and 506-539 (STEH…PSSS). The segment at 540 to 613 (VYSSLLGSCR…VKLPGLSLSG (74 aa)) is type E motif; degenerate.

It belongs to the PPR family. PCMP-E subfamily.

This is Pentatricopeptide repeat-containing protein At2g02750 (PCMP-E22) from Arabidopsis thaliana (Mouse-ear cress).